Here is a 99-residue protein sequence, read N- to C-terminus: NADH-quinone oxidoreductase subunit K (99 aa).

3 consecutive transmembrane segments (helical) span residues 3–23 (PANYLYLSVLLFTIGASGVLL), 28–48 (IVMFMCVELMLNAVNLAFVTF), and 59–79 (MIAFFTMVVAACEVVVGLAII).

It belongs to the complex I subunit 4L family. NDH-1 is composed of 14 different subunits. Subunits NuoA, H, J, K, L, M, N constitute the membrane sector of the complex.

It is found in the cell membrane. The catalysed reaction is a quinone + NADH + 5 H(+)(in) = a quinol + NAD(+) + 4 H(+)(out). NDH-1 shuttles electrons from NADH, via FMN and iron-sulfur (Fe-S) centers, to quinones in the respiratory chain. The immediate electron acceptor for the enzyme in this species is believed to be a menaquinone. Couples the redox reaction to proton translocation (for every two electrons transferred, four hydrogen ions are translocated across the cytoplasmic membrane), and thus conserves the redox energy in a proton gradient. This is NADH-quinone oxidoreductase subunit K from Mycobacterium bovis (strain ATCC BAA-935 / AF2122/97).